We begin with the raw amino-acid sequence, 270 residues long: MRGQGRKESLSDSRDLDGSYDQLTGHPPGPTKKALKQRFLKLLPCCGPQALPSVSETLAAPASLRPHRPRLLDPDSVDDEFELSTVCHRPEGLEQLQEQTKFTRKELQVLYRGFKNECPSGIVNEENFKQIYSQFFPQGDSSTYATFLFNAFDTNHDGSVSFEDFVAGLSVILRGTVDDRLNWAFNLYDLNKDGCITKEEMLDIMKSIYDMMGKYTYPALREEAPREHVESFFQKMDRNKDGVVTIEEFIESCQKDENIMRSMQLFDNVI.

Over residues 1-17 (MRGQGRKESLSDSRDLD) the composition is skewed to basic and acidic residues. The segment at 1-32 (MRGQGRKESLSDSRDLDGSYDQLTGHPPGPTK) is disordered. Phosphoserine is present on S9. 2 S-palmitoyl cysteine lipidation sites follow: C45 and C46. Positions 81–137 (FELSTVCHRPEGLEQLQEQTKFTRKELQVLYRGFKNECPSGIVNEENFKQIYSQFFP) constitute an EF-hand 1; degenerate domain. 3 consecutive EF-hand domains span residues 140–175 (DSST…ILRG), 176–211 (TVDD…IYDM), and 224–259 (APRE…DENI). Ca(2+)-binding residues include D153, N155, D157, S159, D164, D189, N191, D193, C195, E200, D237, N239, D241, and E248. An interaction with KCND2 region spans residues 257-270 (ENIMRSMQLFDNVI).

Belongs to the recoverin family. Component of heteromultimeric potassium channels. Identified in potassium channel complexes containing KCND1, KCND2, KCND3, KCNIP1, KCNIP2, KCNIP3, KCNIP4, DPP6 and DPP10. The KCND2-KCNIP2 channel complex contains four KCND2 and four KCNIP2 subunits. Interacts with KCND2. Probably part of a complex consisting of KCNIP1, KCNIP2 isoform 3 and KCND2. At least isoform 2 and isoform 3 can self-associate to form homodimers and homotetramers. Isoform 3 interacts with KCNIP1 in a calcium-dependent manner. Interacts with KCND3; each KCNIP2 monomer interacts with two adjacent KCND3 subunits, through both the N-terminal inactivation ball of a KCND3 subunit and a C-terminal helix from the adjacent KCND3 subunit, clamping them together; this interaction modulates the channel gating kinetics. Palmitoylated. Palmitoylation enhances association with the plasma membrane. Expressed in brain. Colocalizes with KCND2 in excitatory neurons including cortical and hippocampal CA1 pyramidal cells. Isoform 3 is expressed in heart and in umbilical vein endothelial cells. Not expressed in fetal heart.

Its subcellular location is the cell membrane. Functionally, regulatory subunit of Kv4/D (Shal)-type voltage-gated rapidly inactivating A-type potassium channels. Modulates channel density, inactivation kinetics and rate of recovery from inactivation in a calcium-dependent and isoform-specific manner. Involved in KCND2 and KCND3 trafficking to the cell surface. May be required for the expression of I(To) currents in the heart. In Homo sapiens (Human), this protein is A-type potassium channel modulatory protein KCNIP2.